We begin with the raw amino-acid sequence, 207 residues long: N-(5'-phosphoribosyl)anthranilate isomerase (207 aa).

The protein belongs to the TrpF family.

The enzyme catalyses N-(5-phospho-beta-D-ribosyl)anthranilate = 1-(2-carboxyphenylamino)-1-deoxy-D-ribulose 5-phosphate. It functions in the pathway amino-acid biosynthesis; L-tryptophan biosynthesis; L-tryptophan from chorismate: step 3/5. In Stutzerimonas stutzeri (strain A1501) (Pseudomonas stutzeri), this protein is N-(5'-phosphoribosyl)anthranilate isomerase.